The sequence spans 367 residues: Protein pxr1 (367 aa).

2 disordered regions span residues Met-1–Phe-28 and Lys-156–Ile-336. Residues Asp-15 to Ser-27 show a composition bias toward polar residues. A G-patch domain is found at Thr-25–Gly-79. The segment covering Ser-167–Lys-182 has biased composition (acidic residues). Composition is skewed to basic residues over residues Ser-209–Arg-221, Lys-236–Ser-248, and Lys-265–Arg-277. A compositionally biased stretch (low complexity) spans Ala-282 to Lys-296. The span at Ser-297–Ser-309 shows a compositional bias: basic residues. A compositionally biased stretch (low complexity) spans Ser-310–Ser-328.

The protein belongs to the PINX1 family.

The protein resides in the nucleus. It localises to the nucleolus. Involved in rRNA-processing at A0, A1 and A2 sites and negatively regulates telomerase. The chain is Protein pxr1 (pxr1) from Sclerotinia sclerotiorum (strain ATCC 18683 / 1980 / Ss-1) (White mold).